Consider the following 574-residue polypeptide: Sentrin-specific protease 3 (574 aa).

The interval 1 to 125 (MKETIQGTGS…PTHRKTCSQR (125 aa)) is disordered. Phosphoserine is present on residues serine 54, serine 73, and serine 75. Residues 74–93 (ASEEEEEEEEEEDEDEEEEV) show a composition bias toward acidic residues. The segment covering 112-125 (RPSRPTHRKTCSQR) has biased composition (basic residues). Short sequence motifs (nuclear localization signal) lie at residues 125-128 (RRRR) and 153-159 (RHRGRRR). The segment at 161 to 181 (LAHPKNHLSPQQGGATPQVPS) is disordered. Phosphoserine is present on serine 169. Threonine 176 bears the Phosphothreonine mark. 4 positions are modified to phosphoserine: serine 181, serine 188, serine 212, and serine 232. The segment at 386-543 (HVLTMDDLGT…AFVLQYCKHL (158 aa)) is protease. Residues histidine 465 and aspartate 482 contribute to the active site. Residue cysteine 532 is the Nucleophile of the active site.

It belongs to the peptidase C48 family. Component of some MLL1/MLL complex, at least composed of the core components KMT2A/MLL1, ASH2L, HCFC1/HCF1, WDR5 and RBBP5, as well as the facultative components BACC1, CHD8, E2F6, HSP70, INO80C, KANSL1, LAS1L, MAX, MCRS1, MGA, MYST1/MOF, PELP1, PHF20, PRP31, RING2, RUVB1/TIP49A, RUVB2/TIP49B, SENP3, TAF1, TAF4, TAF6, TAF7, TAF9 and TEX10. Interacts with EP300, NPM1 and CDCA8. Component of the 5FMC complex, at least composed of PELP1, LAS1L, TEX10, WDR18 and SENP3; the complex interacts with methylated CHTOP and ZNF148. Interacts with NOL9. Interacts with CCAR2.

It localises to the nucleus. The protein localises to the nucleolus. Its subcellular location is the nucleoplasm. It is found in the cytoplasm. Its activity is regulated as follows. On oxidative stress, SENP3 degradation is blocked by inhibition of its ubiquitination, which stabilizes it as it accumulates in the nucleoplasm. Its function is as follows. Protease that releases SUMO2 and SUMO3 monomers from sumoylated substrates, but has only weak activity against SUMO1 conjugates. Deconjugates SUMO2 from MEF2D, which increases its transcriptional activation capability. Deconjugates SUMO2 and SUMO3 from CDCA8. Redox sensor that, when redistributed into nucleoplasm, can act as an effector to enhance HIF1A transcriptional activity by desumoylating EP300. Required for rRNA processing through deconjugation of SUMO2 and SUMO3 from nucleophosmin, NPM1. Plays a role in the regulation of sumoylation status of ZNF148. Functions as a component of the Five Friends of Methylated CHTOP (5FMC) complex; the 5FMC complex is recruited to ZNF148 by methylated CHTOP, leading to desumoylation of ZNF148 and subsequent transactivation of ZNF148 target genes. Deconjugates SUMO2 from KAT5. Catalyzes desumoylation of MRE11. The sequence is that of Sentrin-specific protease 3 from Homo sapiens (Human).